A 1537-amino-acid chain; its full sequence is DNA-directed RNA polymerase subunit beta' (1537 aa).

Residues C57, C59, C72, and C75 each contribute to the Zn(2+) site. D746, D748, and D750 together coordinate Mg(2+). The Zn(2+) site is built by C1120, C1201, C1208, and C1211. A disordered region spans residues 1502-1537; that stretch reads LEKYGQTSVSTDAVTGSQRYDDTRPSSTSINPSYGD. Polar residues-rich tracts occupy residues 1506 to 1519 and 1526 to 1537; these read GQTS…TGSQ and PSSTSINPSYGD.

It belongs to the RNA polymerase beta' chain family. The RNAP catalytic core consists of 2 alpha, 1 beta, 1 beta' and 1 omega subunit. When a sigma factor is associated with the core the holoenzyme is formed, which can initiate transcription. Mg(2+) is required as a cofactor. It depends on Zn(2+) as a cofactor.

It carries out the reaction RNA(n) + a ribonucleoside 5'-triphosphate = RNA(n+1) + diphosphate. Its function is as follows. DNA-dependent RNA polymerase catalyzes the transcription of DNA into RNA using the four ribonucleoside triphosphates as substrates. The sequence is that of DNA-directed RNA polymerase subunit beta' from Deinococcus geothermalis (strain DSM 11300 / CIP 105573 / AG-3a).